A 395-amino-acid polypeptide reads, in one-letter code: Cysteine synthase 2 (395 aa).

Residues 6–22 (QDLASGIAMGAVFMYLL) traverse the membrane as a helical segment. Position 83 is an N6-(pyridoxal phosphate)lysine (lysine 83). Pyridoxal 5'-phosphate-binding positions include 228–232 (GTGGT) and serine 335.

This sequence belongs to the cysteine synthase/cystathionine beta-synthase family. Pyridoxal 5'-phosphate is required as a cofactor.

It is found in the mitochondrion. Its subcellular location is the mitochondrion outer membrane. The catalysed reaction is O-acetyl-L-serine + hydrogen sulfide = L-cysteine + acetate. Functionally, putative cysteine synthase that catalyzes the conversion of O-acetyl-L-serine (OAS) into cysteine, the last step in the cysteine biosynthesis pathway. However, in contrast to cysteine synthase cys11, this CS-like protein seems not to function in cysteine biosynthesis, at least under normal growth conditions, although the transcript is produced. The chain is Cysteine synthase 2 (cys12) from Schizosaccharomyces pombe (strain 972 / ATCC 24843) (Fission yeast).